Reading from the N-terminus, the 459-residue chain is tRNA modification GTPase MnmE (459 aa).

R20, E85, and R124 together coordinate (6S)-5-formyl-5,6,7,8-tetrahydrofolate. The TrmE-type G domain occupies 221-380 (GLSTVIIGRP…LEEAIQSLFY (160 aa)). Residue N231 coordinates K(+). GTP is bound by residues 231 to 236 (NVGKSS), 250 to 256 (TDIPGTT), and 275 to 278 (DTAG). S235 contributes to the Mg(2+) binding site. Residues T250, I252, and T255 each coordinate K(+). T256 provides a ligand contact to Mg(2+). K459 is a binding site for (6S)-5-formyl-5,6,7,8-tetrahydrofolate.

The protein belongs to the TRAFAC class TrmE-Era-EngA-EngB-Septin-like GTPase superfamily. TrmE GTPase family. Homodimer. Heterotetramer of two MnmE and two MnmG subunits. K(+) is required as a cofactor.

It is found in the cytoplasm. Functionally, exhibits a very high intrinsic GTPase hydrolysis rate. Involved in the addition of a carboxymethylaminomethyl (cmnm) group at the wobble position (U34) of certain tRNAs, forming tRNA-cmnm(5)s(2)U34. This is tRNA modification GTPase MnmE from Bacillus velezensis (strain DSM 23117 / BGSC 10A6 / LMG 26770 / FZB42) (Bacillus amyloliquefaciens subsp. plantarum).